The chain runs to 338 residues: Transcription factor MYB76 (338 aa).

HTH myb-type domains are found at residues 9-65 (GEGL…KPDI) and 66-116 (KRGE…KKRL). 2 DNA-binding regions (H-T-H motif) span residues 37 to 61 (WRDI…TNYL) and 89 to 112 (WSVI…NTHL). Disordered regions lie at residues 123 to 171 (PVTH…SSNL) and 176 to 195 (SKIS…CKKR). Basic and acidic residues predominate over residues 140–154 (MKFDFQKKSNQDEHS). Residues 155-171 (SQSSSTTPASLPLSSNL) show a composition bias toward low complexity.

Can form complexes with MYC2, MYC3 or MYC4. In terms of tissue distribution, expressed in both vegetative and generative organs. Mostly present in inflorescences, flowers and seedlings, in the transition zone between roots and the foliar part, and stems, and, to a lower extent, in leaves (in midvein and trichomes).

The protein localises to the nucleus. Plays a role in determining the spatial distribution of aliphatic glucosinolates (AGLSs) within the leaf, mostly short chained. Together with MYB28/HAG1 and MYB29/HAG3, promotes aliphatic glucosinolate biosynthesis and represses indolic glucosinolate biosynthesis, but could not activate AGSL biosynthesis on its own. The chain is Transcription factor MYB76 (MYB76) from Arabidopsis thaliana (Mouse-ear cress).